The chain runs to 66 residues: Large ribosomal subunit protein bL31 (66 aa).

Positions 16, 18, 36, and 39 each coordinate Zn(2+).

The protein belongs to the bacterial ribosomal protein bL31 family. Type A subfamily. Part of the 50S ribosomal subunit. Requires Zn(2+) as cofactor.

Its function is as follows. Binds the 23S rRNA. This is Large ribosomal subunit protein bL31 from Campylobacter lari (strain RM2100 / D67 / ATCC BAA-1060).